Here is a 219-residue protein sequence, read N- to C-terminus: 3-dehydroquinate dehydratase (219 aa).

3-dehydroquinate contacts are provided by residues 28–30 (ELR) and Arg61. Residue His116 is the Proton donor/acceptor of the active site. Lys142 serves as the catalytic Schiff-base intermediate with substrate. Positions 180 and 203 each coordinate 3-dehydroquinate.

The protein belongs to the type-I 3-dehydroquinase family. As to quaternary structure, homodimer.

It catalyses the reaction 3-dehydroquinate = 3-dehydroshikimate + H2O. It participates in metabolic intermediate biosynthesis; chorismate biosynthesis; chorismate from D-erythrose 4-phosphate and phosphoenolpyruvate: step 3/7. In terms of biological role, involved in the third step of the chorismate pathway, which leads to the biosynthesis of aromatic amino acids. Catalyzes the cis-dehydration of 3-dehydroquinate (DHQ) and introduces the first double bond of the aromatic ring to yield 3-dehydroshikimate. This Aquifex aeolicus (strain VF5) protein is 3-dehydroquinate dehydratase.